The following is a 331-amino-acid chain: Phosphoenolpyruvate transferase (331 aa).

Asp63 serves as a coordination point for 7,8-didemethyl-8-hydroxy-5-deazariboflavin.

It belongs to the CofD family. As to quaternary structure, homodimer. Mg(2+) is required as a cofactor.

The catalysed reaction is enolpyruvoyl-2-diphospho-5'-guanosine + 7,8-didemethyl-8-hydroxy-5-deazariboflavin = dehydro coenzyme F420-0 + GMP + H(+). It functions in the pathway cofactor biosynthesis; coenzyme F420 biosynthesis. In terms of biological role, catalyzes the transfer of the phosphoenolpyruvate moiety from enoylpyruvoyl-2-diphospho-5'-guanosine (EPPG) to 7,8-didemethyl-8-hydroxy-5-deazariboflavin (FO) with the formation of dehydro coenzyme F420-0 and GMP. The polypeptide is Phosphoenolpyruvate transferase (Mycobacterium sp. (strain KMS)).